Reading from the N-terminus, the 517-residue chain is Ribonuclease Y (517 aa).

The chain crosses the membrane as a helical span at residues 1–21; that stretch reads MIESLIALIAAIVGLGIGYLV. One can recognise a KH domain in the interval 207–273; that stretch reads LINVINIKND…TKVIELLVED (67 aa). One can recognise an HD domain in the interval 333 to 426; the sequence is ALAHSLEVAH…VCAADTLSAA (94 aa).

It belongs to the RNase Y family.

It localises to the cell membrane. In terms of biological role, endoribonuclease that initiates mRNA decay. The sequence is that of Ribonuclease Y from Campylobacter jejuni subsp. jejuni serotype O:6 (strain 81116 / NCTC 11828).